Consider the following 344-residue polypeptide: D-amino-acid oxidase (344 aa).

6 residues coordinate FAD: Ala11, Ser14, Ser49, Gly53, Asn55, and Ile167. Residues Tyr229 and Arg290 each contribute to the (R)-lactate site. Anthranilate-binding residues include Tyr229 and Arg290. The FAD site is built by Arg290, Ser321, Gly324, Tyr325, and Gln326.

Belongs to the DAMOX/DASOX family. The cofactor is FAD.

Its subcellular location is the peroxisome. The enzyme catalyses a D-alpha-amino acid + O2 + H2O = a 2-oxocarboxylate + H2O2 + NH4(+). It catalyses the reaction D-alanine + O2 + H2O = pyruvate + H2O2 + NH4(+). In terms of biological role, catalyzes the oxidative deamination of D-amino acids with broad substrate specificity. Enables the organism to utilize D-amino acids as a source of nutrients. Enables the organism to utilize D-alanine as a source of nitrogen. The chain is D-amino-acid oxidase from Komagataella phaffii (strain GS115 / ATCC 20864) (Yeast).